The primary structure comprises 421 residues: 3-isopropylmalate dehydratase large subunit (421 aa).

Residues C302, C362, and C365 each coordinate [4Fe-4S] cluster.

Belongs to the aconitase/IPM isomerase family. LeuC type 2 subfamily. As to quaternary structure, heterodimer of LeuC and LeuD. [4Fe-4S] cluster serves as cofactor.

The enzyme catalyses (2R,3S)-3-isopropylmalate = (2S)-2-isopropylmalate. It participates in amino-acid biosynthesis; L-leucine biosynthesis; L-leucine from 3-methyl-2-oxobutanoate: step 2/4. Catalyzes the isomerization between 2-isopropylmalate and 3-isopropylmalate, via the formation of 2-isopropylmaleate. In Campylobacter fetus subsp. fetus (strain 82-40), this protein is 3-isopropylmalate dehydratase large subunit.